The sequence spans 95 residues: Aspartyl/glutamyl-tRNA(Asn/Gln) amidotransferase subunit C (95 aa).

The protein belongs to the GatC family. Heterotrimer of A, B and C subunits.

The enzyme catalyses L-glutamyl-tRNA(Gln) + L-glutamine + ATP + H2O = L-glutaminyl-tRNA(Gln) + L-glutamate + ADP + phosphate + H(+). It catalyses the reaction L-aspartyl-tRNA(Asn) + L-glutamine + ATP + H2O = L-asparaginyl-tRNA(Asn) + L-glutamate + ADP + phosphate + 2 H(+). Its function is as follows. Allows the formation of correctly charged Asn-tRNA(Asn) or Gln-tRNA(Gln) through the transamidation of misacylated Asp-tRNA(Asn) or Glu-tRNA(Gln) in organisms which lack either or both of asparaginyl-tRNA or glutaminyl-tRNA synthetases. The reaction takes place in the presence of glutamine and ATP through an activated phospho-Asp-tRNA(Asn) or phospho-Glu-tRNA(Gln). The protein is Aspartyl/glutamyl-tRNA(Asn/Gln) amidotransferase subunit C of Beijerinckia indica subsp. indica (strain ATCC 9039 / DSM 1715 / NCIMB 8712).